Reading from the N-terminus, the 181-residue chain is Large ribosomal subunit protein uL5 (181 aa).

It belongs to the universal ribosomal protein uL5 family. Part of the 50S ribosomal subunit; part of the 5S rRNA/L5/L18/L25 subcomplex. Contacts the 5S rRNA and the P site tRNA. Forms a bridge to the 30S subunit in the 70S ribosome.

Its function is as follows. This is one of the proteins that bind and probably mediate the attachment of the 5S RNA into the large ribosomal subunit, where it forms part of the central protuberance. In the 70S ribosome it contacts protein S13 of the 30S subunit (bridge B1b), connecting the 2 subunits; this bridge is implicated in subunit movement. Contacts the P site tRNA; the 5S rRNA and some of its associated proteins might help stabilize positioning of ribosome-bound tRNAs. This chain is Large ribosomal subunit protein uL5, found in Sulfurimonas denitrificans (strain ATCC 33889 / DSM 1251) (Thiomicrospira denitrificans (strain ATCC 33889 / DSM 1251)).